We begin with the raw amino-acid sequence, 248 residues long: MNVLISNDDGYLSEGIAVLARVTAEFANVRVVAPERDRSGVSNSLTLERPLQLKQAQNGFYYVNGTPTDCIHIGQSVFSDFQADFVFSGINRGANMGDDTLYSGTVAAATEAYLMGIPAVAFSLNDASGRYWATAEQALWTLLAHFFKTPPQSPILWNINIPAVAPEDVRGIKIARLGRRHHGQNVIPARNPRGEQIYWIGPVGEVSDREEGTDFGECGAGFITVTPLQIDLTAYPDMAETAAFWHAD.

Residues D8, D9, S39, and N91 each contribute to the a divalent metal cation site.

This sequence belongs to the SurE nucleotidase family. A divalent metal cation is required as a cofactor.

The protein resides in the cytoplasm. It catalyses the reaction a ribonucleoside 5'-phosphate + H2O = a ribonucleoside + phosphate. Its function is as follows. Nucleotidase that shows phosphatase activity on nucleoside 5'-monophosphates. The chain is 5'-nucleotidase SurE from Neisseria meningitidis serogroup C (strain 053442).